The sequence spans 357 residues: MEYKRFKTRQIKVGNVLIGGDAPISVQSMLFTKTRDIEGSLEQINRLYFAGANIVRLACLDMADARALKEIKAKSPLPLIVDIHFNHNLAVYCAEFIDGVRINPGNIGSKENIKEVVKACKERGIPIRIGINHGSIEKQFSDKFGYGVDAMLESAMYNIKLLEDLDFFDIKISMKTSDAQKTIEAYERLRPLCDYPFHLGVTEAGTKFHSTVKSSIALGNLLLKGIGDTMRVSMTGELEEEIRVARAILQDSGVQKSGVNIISCPTCGRIQSDLLSAIKIVEEKTKHIKEPLNISVMGCVVNALGEAKGADVAIAFGKNQGLVIRHGEVVAKLKESELVDRFLAEVEDEVKSRAVKE.

[4Fe-4S] cluster is bound by residues cysteine 264, cysteine 267, cysteine 299, and glutamate 306.

Belongs to the IspG family. [4Fe-4S] cluster serves as cofactor.

The enzyme catalyses (2E)-4-hydroxy-3-methylbut-2-enyl diphosphate + oxidized [flavodoxin] + H2O + 2 H(+) = 2-C-methyl-D-erythritol 2,4-cyclic diphosphate + reduced [flavodoxin]. It functions in the pathway isoprenoid biosynthesis; isopentenyl diphosphate biosynthesis via DXP pathway; isopentenyl diphosphate from 1-deoxy-D-xylulose 5-phosphate: step 5/6. In terms of biological role, converts 2C-methyl-D-erythritol 2,4-cyclodiphosphate (ME-2,4cPP) into 1-hydroxy-2-methyl-2-(E)-butenyl 4-diphosphate. In Campylobacter jejuni (strain RM1221), this protein is 4-hydroxy-3-methylbut-2-en-1-yl diphosphate synthase (flavodoxin).